The following is a 388-amino-acid chain: Xylose isomerase (388 aa).

Active-site residues include His-54 and Asp-57. Residues Glu-181, Glu-217, His-220, Asp-245, Asp-255, Asp-257, and Asp-287 each coordinate Mg(2+).

This sequence belongs to the xylose isomerase family. Homotetramer. The cofactor is Mg(2+).

The protein resides in the cytoplasm. The catalysed reaction is alpha-D-xylose = alpha-D-xylulofuranose. This is Xylose isomerase from Streptomyces avermitilis (strain ATCC 31267 / DSM 46492 / JCM 5070 / NBRC 14893 / NCIMB 12804 / NRRL 8165 / MA-4680).